The following is a 335-amino-acid chain: MKRIAIDAMGGDNAPKAIVEGVNQAIEAFSDIEIQLYGDQTKINSYLIQSDRVAIIHTDEKIMSDDEPAKAVRRKKKASMVLAAKAVKEGKADAIISAGNTGVLLAVGLFVVGRIKGVDRPGLLSTIPTVTGLGFDMLDLGANAENTAKHLHQYAILGSFYAKNVRGIANPRVGLLNNGTEETKGDPLRKATYELLTADNTISFVGNVEARELMSGVADVIVSDGFTGNAVLKSIEGTAISIMGQLKQIINSGGIKTKIGASLLKSSLYEMKKTLDYSSAGGAVLFGLKAPVVKSHGSSDVKAIFSTIKQVRTMLDTNVVGQLVEEFAKETQVND.

It belongs to the PlsX family. As to quaternary structure, homodimer. Probably interacts with PlsY.

It is found in the cytoplasm. The catalysed reaction is a fatty acyl-[ACP] + phosphate = an acyl phosphate + holo-[ACP]. It functions in the pathway lipid metabolism; phospholipid metabolism. Functionally, catalyzes the reversible formation of acyl-phosphate (acyl-PO(4)) from acyl-[acyl-carrier-protein] (acyl-ACP). This enzyme utilizes acyl-ACP as fatty acyl donor, but not acyl-CoA. This is Phosphate acyltransferase from Streptococcus pyogenes serotype M18 (strain MGAS8232).